Reading from the N-terminus, the 125-residue chain is Glycine cleavage system H protein (125 aa).

Residues 21-103 (SVTIGISNQA…YSAGWIVKIK (83 aa)) enclose the Lipoyl-binding domain. K62 carries the post-translational modification N6-lipoyllysine.

The protein belongs to the GcvH family. In terms of assembly, the glycine cleavage system is composed of four proteins: P, T, L and H. It depends on (R)-lipoate as a cofactor.

Its function is as follows. The glycine cleavage system catalyzes the degradation of glycine. The H protein shuttles the methylamine group of glycine from the P protein to the T protein. This Psychromonas ingrahamii (strain DSM 17664 / CCUG 51855 / 37) protein is Glycine cleavage system H protein.